The sequence spans 89 residues: Small ribosomal subunit protein uS15 (89 aa).

The protein belongs to the universal ribosomal protein uS15 family. In terms of assembly, part of the 30S ribosomal subunit. Forms a bridge to the 50S subunit in the 70S ribosome, contacting the 23S rRNA.

In terms of biological role, one of the primary rRNA binding proteins, it binds directly to 16S rRNA where it helps nucleate assembly of the platform of the 30S subunit by binding and bridging several RNA helices of the 16S rRNA. Functionally, forms an intersubunit bridge (bridge B4) with the 23S rRNA of the 50S subunit in the ribosome. This chain is Small ribosomal subunit protein uS15, found in Nostoc punctiforme (strain ATCC 29133 / PCC 73102).